Here is a 123-residue protein sequence, read N- to C-terminus: Late histone H2B.L1 (123 aa).

Residues 1-10 show a composition bias toward low complexity; it reads MPAKAQPAGK. Residues 1–33 are disordered; it reads MPAKAQPAGKKGSKKAKAPRPSGGKKRRRRRKE. Residues 11–32 are compositionally biased toward basic residues; it reads KGSKKAKAPRPSGGKKRRRRRK. A glycan (O-linked (GlcNAc) serine) is linked at Ser-110. A Glycyl lysine isopeptide (Lys-Gly) (interchain with G-Cter in ubiquitin) cross-link involves residue Lys-118.

The protein belongs to the histone H2B family. In terms of assembly, the nucleosome is a histone octamer containing two molecules each of H2A, H2B, H3 and H4 assembled in one H3-H4 heterotetramer and two H2A-H2B heterodimers. The octamer wraps approximately 147 bp of DNA. Monoubiquitination of Lys-118 gives a specific tag for epigenetic transcriptional activation and is also prerequisite for histone H3 'Lys-4' and 'Lys-79' methylation. In terms of processing, glcNAcylation at Ser-110 promotes monoubiquitination of Lys-118. It fluctuates in response to extracellular glucose, and associates with transcribed genes.

Its subcellular location is the nucleus. The protein localises to the chromosome. Its function is as follows. Core component of nucleosome. Nucleosomes wrap and compact DNA into chromatin, limiting DNA accessibility to the cellular machineries which require DNA as a template. Histones thereby play a central role in transcription regulation, DNA repair, DNA replication and chromosomal stability. DNA accessibility is regulated via a complex set of post-translational modifications of histones, also called histone code, and nucleosome remodeling. In Strongylocentrotus purpuratus (Purple sea urchin), this protein is Late histone H2B.L1.